A 273-amino-acid polypeptide reads, in one-letter code: Putative B3 domain-containing protein At5g58280 (273 aa).

A DNA-binding region (TF-B3) is located at residues phenylalanine 127 to asparagine 218. A disordered region spans residues serine 225–alanine 273. Residues serine 236–aspartate 252 show a composition bias toward acidic residues. The span at arginine 258 to alanine 273 shows a compositional bias: basic residues.

Its subcellular location is the nucleus. The chain is Putative B3 domain-containing protein At5g58280 from Arabidopsis thaliana (Mouse-ear cress).